A 602-amino-acid chain; its full sequence is Prostaglandin G/H synthase 1 (602 aa).

The signal sequence occupies residues 1-26 (MSRRSLSLQFPLLLLLLLLPPPPVLL). Positions 34–72 (PVNPCCYYPCQNQGVCVRFGLDHYQCDCTRTGYSGPNCT) constitute an EGF-like domain. 4 disulfides stabilise this stretch: Cys-38-Cys-49, Cys-39-Cys-161, Cys-43-Cys-59, and Cys-61-Cys-71. 3 N-linked (GlcNAc...) asparagine glycosylation sites follow: Asn-70, Asn-106, and Asn-146. The active-site Proton acceptor is His-209. The active-site For cyclooxygenase activity is Tyr-387. A heme b-binding site is contributed by His-390. Asn-412 carries an N-linked (GlcNAc...) asparagine glycan. Cys-571 and Cys-577 are disulfide-bonded.

This sequence belongs to the prostaglandin G/H synthase family. In terms of assembly, homodimer. Heme b serves as cofactor.

It is found in the microsome membrane. It localises to the endoplasmic reticulum membrane. It carries out the reaction (5Z,8Z,11Z,14Z)-eicosatetraenoate + AH2 + 2 O2 = prostaglandin H2 + A + H2O. It catalyses the reaction (5Z,8Z,11Z,14Z)-eicosatetraenoate + 2 O2 = prostaglandin G2. The enzyme catalyses prostaglandin G2 + AH2 = prostaglandin H2 + A + H2O. The catalysed reaction is (9Z,12Z)-octadecadienoate + AH2 + O2 = (9R)-hydroxy-(10E,12Z)-octadecadienoate + A + H2O. It carries out the reaction (9Z,12Z)-octadecadienoate + AH2 + O2 = (9S)-hydroxy-(10E,12Z)-octadecadienoate + A + H2O. It catalyses the reaction (9Z,12Z)-octadecadienoate + AH2 + O2 = (13S)-hydroxy-(9Z,11E)-octadecadienoate + A + H2O. The enzyme catalyses (9Z,12Z)-octadecadienoate + AH2 + O2 = (13R)-hydroxy-(9Z,11E)-octadecadienoate + A + H2O. Its pathway is lipid metabolism; prostaglandin biosynthesis. With respect to regulation, the cyclooxygenase activity is inhibited by nonsteroidal anti-inflammatory drugs (NSAIDs) including ibuprofen, flurbiprofen, ketoprofen, naproxen, flurbiprofen, anirolac, fenclofenac and diclofenac. Dual cyclooxygenase and peroxidase that plays an important role in the biosynthesis pathway of prostanoids, a class of C20 oxylipins mainly derived from arachidonate ((5Z,8Z,11Z,14Z)-eicosatetraenoate, AA, C20:4(n-6)), with a particular role in the inflammatory response. The cyclooxygenase activity oxygenates AA to the hydroperoxy endoperoxide prostaglandin G2 (PGG2), and the peroxidase activity reduces PGG2 to the hydroxy endoperoxide prostaglandin H2 (PGH2), the precursor of all 2-series prostaglandins and thromboxanes. This complex transformation is initiated by abstraction of hydrogen at carbon 13 (with S-stereochemistry), followed by insertion of molecular O2 to form the endoperoxide bridge between carbon 9 and 11 that defines prostaglandins. The insertion of a second molecule of O2 (bis-oxygenase activity) yields a hydroperoxy group in PGG2 that is then reduced to PGH2 by two electrons. Involved in the constitutive production of prostanoids in particular in the stomach and platelets. In gastric epithelial cells, it is a key step in the generation of prostaglandins, such as prostaglandin E2 (PGE2), which plays an important role in cytoprotection. In platelets, it is involved in the generation of thromboxane A2 (TXA2), which promotes platelet activation and aggregation, vasoconstriction and proliferation of vascular smooth muscle cells. Can also use linoleate (LA, (9Z,12Z)-octadecadienoate, C18:2(n-6)) as substrate and produce hydroxyoctadecadienoates (HODEs) in a regio- and stereospecific manner, being (9R)-HODE ((9R)-hydroxy-(10E,12Z)-octadecadienoate) and (13S)-HODE ((13S)-hydroxy-(9Z,11E)-octadecadienoate) its major products. The protein is Prostaglandin G/H synthase 1 of Rattus norvegicus (Rat).